A 283-amino-acid polypeptide reads, in one-letter code: uncharacterized protein (283 aa).

Tyr55 (proton donor) is an active-site residue.

Belongs to the aldo/keto reductase family.

It localises to the cytoplasm. The protein resides in the nucleus. This is an uncharacterized protein from Schizosaccharomyces pombe (strain 972 / ATCC 24843) (Fission yeast).